A 450-amino-acid chain; its full sequence is 23S rRNA (uracil(1939)-C(5))-methyltransferase RlmD (450 aa).

The region spanning 12–70 is the TRAM domain; it reads SKQLSAKLSLSVNQLDHLGAGIAQHQGKVVFIPGALPDETVTVQFTEQKKNYARAKLIK. Positions 83, 89, 92, and 171 each coordinate [4Fe-4S] cluster. Positions 283, 312, 317, 333, 360, and 380 each coordinate S-adenosyl-L-methionine. Cysteine 406 (nucleophile) is an active-site residue.

It belongs to the class I-like SAM-binding methyltransferase superfamily. RNA M5U methyltransferase family. RlmD subfamily.

It catalyses the reaction uridine(1939) in 23S rRNA + S-adenosyl-L-methionine = 5-methyluridine(1939) in 23S rRNA + S-adenosyl-L-homocysteine + H(+). Its function is as follows. Catalyzes the formation of 5-methyl-uridine at position 1939 (m5U1939) in 23S rRNA. The chain is 23S rRNA (uracil(1939)-C(5))-methyltransferase RlmD from Shewanella baltica (strain OS155 / ATCC BAA-1091).